The sequence spans 727 residues: Prolyl endopeptidase-like (727 aa).

Active-site charge relay system residues include Ser559, Asp645, and His690.

Belongs to the peptidase S9A family. Homodimer. Interacts with the AP-1 complex.

Its subcellular location is the cytoplasm. It is found in the cytosol. It localises to the golgi apparatus. The protein localises to the trans-Golgi network. The protein resides in the cytoskeleton. Its subcellular location is the nucleus. Its function is as follows. Serine peptidase whose precise substrate specificity remains unclear. Does not cleave peptides after a arginine or lysine residue. Regulates trans-Golgi network morphology and sorting by regulating the membrane binding of the AP-1 complex. May play a role in the regulation of synaptic vesicle exocytosis. This chain is Prolyl endopeptidase-like (PREPL), found in Pongo abelii (Sumatran orangutan).